A 294-amino-acid chain; its full sequence is Nucleotide-binding protein Adeh_0147 (294 aa).

An ATP-binding site is contributed by 17-24 (GVSGSGKS). Residue 68–71 (DARE) participates in GTP binding.

The protein belongs to the RapZ-like family.

In terms of biological role, displays ATPase and GTPase activities. The polypeptide is Nucleotide-binding protein Adeh_0147 (Anaeromyxobacter dehalogenans (strain 2CP-C)).